The following is a 303-amino-acid chain: MSFTIKVKEEIIAASSKDIAELSALIKMSGSVGLTNQGLTLSISTENAKIARHIYQLIENRYRCNPELRHYNKTNLKKNRVYTVFVAENVNDILSDLQLADSFFGFETGIETSIMEDDDAGRSYLRGAFLATGTVRDPEKGRYQLEIFSVYQDHAEDLASLMKKFMLDAKVLQHKNGFVTYLQKAEDIMDFLIVIGAMTSKEIFEEVKIMRETRNDLNRANNAETANIARTISASMKTINNIIKIMDTVGLEILPVELRQIAQLRIANPDYSIQQIADSIEPPLTKSGVNHRLRKINKIADDL.

The segment at residues 272-303 (SIQQIADSIEPPLTKSGVNHRLRKINKIADDL) is a DNA-binding region (H-T-H motif).

This sequence belongs to the WhiA family.

Its function is as follows. Involved in cell division and chromosome segregation. The polypeptide is Probable cell division protein WhiA (Streptococcus thermophilus (strain ATCC BAA-250 / LMG 18311)).